The primary structure comprises 117 residues: Large ribosomal subunit protein bL20 (117 aa).

Belongs to the bacterial ribosomal protein bL20 family.

Binds directly to 23S ribosomal RNA and is necessary for the in vitro assembly process of the 50S ribosomal subunit. It is not involved in the protein synthesizing functions of that subunit. The sequence is that of Large ribosomal subunit protein bL20 from Rickettsia bellii (strain OSU 85-389).